The chain runs to 260 residues: Hydroxyethylthiazole kinase 1 (260 aa).

Methionine 39 contacts substrate. ATP is bound by residues arginine 115 and threonine 160. Position 187 (glycine 187) interacts with substrate.

It belongs to the Thz kinase family. It depends on Mg(2+) as a cofactor.

The catalysed reaction is 5-(2-hydroxyethyl)-4-methylthiazole + ATP = 4-methyl-5-(2-phosphooxyethyl)-thiazole + ADP + H(+). The protein operates within cofactor biosynthesis; thiamine diphosphate biosynthesis; 4-methyl-5-(2-phosphoethyl)-thiazole from 5-(2-hydroxyethyl)-4-methylthiazole: step 1/1. In terms of biological role, catalyzes the phosphorylation of the hydroxyl group of 4-methyl-5-beta-hydroxyethylthiazole (THZ). The protein is Hydroxyethylthiazole kinase 1 of Streptococcus pneumoniae (strain P1031).